The following is a 289-amino-acid chain: ATP synthase gamma chain (289 aa).

This sequence belongs to the ATPase gamma chain family. As to quaternary structure, F-type ATPases have 2 components, CF(1) - the catalytic core - and CF(0) - the membrane proton channel. CF(1) has five subunits: alpha(3), beta(3), gamma(1), delta(1), epsilon(1). CF(0) has three main subunits: a, b and c.

The protein localises to the cell inner membrane. In terms of biological role, produces ATP from ADP in the presence of a proton gradient across the membrane. The gamma chain is believed to be important in regulating ATPase activity and the flow of protons through the CF(0) complex. This Acinetobacter baumannii (strain AB307-0294) protein is ATP synthase gamma chain.